A 270-amino-acid chain; its full sequence is tRNA pseudouridine synthase B (270 aa).

The Nucleophile role is filled by D49.

Belongs to the pseudouridine synthase TruB family. Type 1 subfamily.

The catalysed reaction is uridine(55) in tRNA = pseudouridine(55) in tRNA. Its function is as follows. Responsible for synthesis of pseudouridine from uracil-55 in the psi GC loop of transfer RNAs. The chain is tRNA pseudouridine synthase B from Bartonella quintana (strain Toulouse) (Rochalimaea quintana).